Here is a 159-residue protein sequence, read N- to C-terminus: 3-dehydroquinate dehydratase (159 aa).

Catalysis depends on Y31, which acts as the Proton acceptor. Positions 82, 88, and 95 each coordinate substrate. Residue H109 is the Proton donor of the active site. Substrate is bound by residues 110-111 (IS) and R120.

The protein belongs to the type-II 3-dehydroquinase family. In terms of assembly, homododecamer.

The catalysed reaction is 3-dehydroquinate = 3-dehydroshikimate + H2O. Its pathway is metabolic intermediate biosynthesis; chorismate biosynthesis; chorismate from D-erythrose 4-phosphate and phosphoenolpyruvate: step 3/7. Catalyzes a trans-dehydration via an enolate intermediate. The chain is 3-dehydroquinate dehydratase from Streptomyces avermitilis (strain ATCC 31267 / DSM 46492 / JCM 5070 / NBRC 14893 / NCIMB 12804 / NRRL 8165 / MA-4680).